The chain runs to 426 residues: MVLSVPVIALGATLGTATSILALCGVTCLCRHMHPKKGLLPRDREPDPEKARPGVLQAAQQFNVKKSTEPVQPRPLLKFPDIYGPRPAVTAPEVINYADYTLGTTEESAAPASPQAQSDSRLKRQVTEELFILPQNGVVEDVCVMETWNPEKAASWNQAPKLHFRLDYDQKKAELFVTSLEAVTSDHEGGCDCYIQGSVAVKTGSVEAQTALKKRQLHTTWEEGLTLPLGEEELPTATLTLTLRTCDRFSRHSVIGELRLGLNGASVPLGTAQWGELKTTAKEPSAGTGEVLLSISYLPAANRLLVVLIKAKNLHSNQSKELLGKDVSVKVTLKHQAQKLKKKQTKRAKHKINPVWNEMIMFELPDDLLQASSVELEVLGQGEEGPSCELGRCSLGLHASGSERSHWEEMLKNPRRQIAMWHQLHL.

Over 1 to 6 (MVLSVP) the chain is Vesicular. A helical membrane pass occupies residues 7 to 29 (VIALGATLGTATSILALCGVTCL). Topologically, residues 30 to 426 (CRHMHPKKGL…QIAMWHQLHL (397 aa)) are cytoplasmic. 2 C2 domains span residues 158-275 (QAPK…AQWG) and 287-422 (GTGE…AMWH).

The protein belongs to the synaptotagmin family. As to quaternary structure, interacts with NRXN1. In terms of tissue distribution, expressed in brain, spleen, kidney and testis.

It is found in the membrane. May be involved in transport vesicle docking to the plasma membrane. This chain is Synaptotagmin-13 (Syt13), found in Rattus norvegicus (Rat).